Consider the following 121-residue polypeptide: uncharacterized protein (121 aa).

A run of 3 helical transmembrane segments spans residues 1 to 21 (MILW…IMPV), 55 to 75 (LKYI…FCSI), and 92 to 112 (LFFK…IHFL).

Its subcellular location is the membrane. This is an uncharacterized protein from Saccharomyces cerevisiae (strain ATCC 204508 / S288c) (Baker's yeast).